A 271-amino-acid polypeptide reads, in one-letter code: DNA-binding protein HEXBP (271 aa).

Basic and acidic residues-rich tracts occupy residues 1–12 and 21–42; these read MSETEDVKRPRT and CGKEGHYARECPEADSKGDERS. The interval 1 to 42 is disordered; sequence MSETEDVKRPRTESSTSCRNCGKEGHYARECPEADSKGDERS. CCHC-type zinc fingers lie at residues 16–33, 43–60, 70–87, and 97–114; these read TSCRNCGKEGHYARECPE, TTCFRCGEEGHMSRECPN, MTCFRCGEAGHMSRDCPN, and FECYKCGQEGHLSRDCPS. The disordered stretch occupies residues 107–136; the sequence is HLSRDCPSSQGGSRGGYGQKRGRSGAQGGY. The span at 118–136 shows a compositional bias: gly residues; that stretch reads GSRGGYGQKRGRSGAQGGY. 5 consecutive CCHC-type zinc fingers follow at residues 140-157, 168-185, 196-213, 222-239, and 253-270; these read RTCYKCGDAGHISRDCPN, RKCYKCGESGHMSRECPS, RACYKCGKPGHISRECPE, and RTCYKCGEAGHISRDCPS.

Its subcellular location is the nucleus. In terms of biological role, binds to single-stranded DNA located in the 5' hexanucleotide repeat region of the L.major leishmanolysin (GP63) gene. The protein is DNA-binding protein HEXBP (HEXBP) of Leishmania major.